The primary structure comprises 1558 residues: Arginine-glutamic acid dipeptide repeats protein (1558 aa).

The span at 1–36 (MTADKDKDKDKEKDRDRDRDRERDKRDKARESENAR) shows a compositional bias: basic and acidic residues. The disordered stretch occupies residues 1 to 90 (MTADKDKDKD…KKKSRYERTD (90 aa)). A phosphoserine mark is found at serine 53 and serine 56. Residues 74-85 (KSRKKPPKKKSR) are compositionally biased toward basic residues. A BAH domain is found at 103–283 (VVYRPGDCVY…PETRRLNSTQ (181 aa)). Residue threonine 120 is modified to Phosphothreonine. A phosphoserine mark is found at serine 142 and serine 304. The ELM2 domain occupies 284-387 (GEIRVGPSHQ…KALQRLVKKP (104 aa)). One can recognise an SANT domain in the interval 391–443 (LIEKCWTEDEVKRFVKGLRQYGKNFFRIRKELLPSKETGELITFYYYWKKTPE). A disordered region spans residues 464 to 495 (TRTASTPVNTPSRPPSSEFLDLSSASEDDFDS). The segment covering 465-474 (RTASTPVNTP) has biased composition (polar residues). Low complexity predominate over residues 479 to 488 (SSEFLDLSSA). The segment at 507 to 532 (CRHCFTTTSKDWHHGGRENILLCTDC) adopts a GATA-type zinc-finger fold. Positions 542-1125 (LPPIEKPVDP…PSHASQSARF (584 aa)) are disordered. Residue lysine 560 forms a Glycyl lysine isopeptide (Lys-Gly) (interchain with G-Cter in SUMO2) linkage. At threonine 593 the chain carries Phosphothreonine. 3 positions are modified to phosphoserine: serine 594, serine 600, and serine 613. Over residues 609 to 623 (SGRNSPSAASTSSND) the composition is skewed to low complexity. The span at 624-640 (SKAETVKKSAKKVKEEA) shows a compositional bias: basic and acidic residues. Lysine 637 participates in a covalent cross-link: Glycyl lysine isopeptide (Lys-Gly) (interchain with G-Cter in SUMO2). Residues serine 642, serine 656, serine 675, and serine 679 each carry the phosphoserine modification. Residues 652–673 (EKVASDTEDTDRITSKKTKTQE) are compositionally biased toward basic and acidic residues. The span at 688-708 (SDSRSVNDEGSSDPKDIDQDN) shows a compositional bias: basic and acidic residues. Residues 709–720 (RSTSPSIPSPQD) show a composition bias toward polar residues. The segment covering 726-752 (DSSAQQQMLQAQPPALQAPSGAASAPS) has biased composition (low complexity). The span at 778 to 792 (SPATSQPPNQTQSTV) shows a compositional bias: polar residues. A compositionally biased stretch (pro residues) spans 806–823 (LHPPRLPSPHPPLQPMTA). Low complexity-rich tracts occupy residues 824 to 857 (PPSQ…LLQH), 865 to 874 (GLPSQPSQGQ), and 891 to 901 (QLPASQSALQP). The span at 902 to 932 (QQPPREQPLPPAPLAMPHIKPPPTTPIPQLP) shows a compositional bias: pro residues. The span at 962–972 (KPLSSLSTHHP) shows a compositional bias: low complexity. Polar residues predominate over residues 1012 to 1023 (HPTTGLHQVPSQ). Positions 1027–1053 (PQHPFVPGGPPPITPPSCPPTSTPPAG) are enriched in pro residues. Low complexity predominate over residues 1054–1077 (PSSSSQPPCSAAVSSGGSVPGAPS). A phosphoserine mark is found at serine 1098, serine 1105, and serine 1107. Residues 1098–1109 (SPPPPPRSPSPE) are compositionally biased toward pro residues. Threonine 1111 carries the phosphothreonine modification. Residues 1148–1203 (GSKLAKKREEAIEKAKREAEQKAREEREREKEKEKEREREREREREAERAAKASSS) are a coiled coil. The residue at position 1150 (lysine 1150) is an N6-acetyllysine. Positions 1154-1198 (KREEAIEKAKREAEQKAREEREREKEKEKEREREREREREAERAA) are enriched in basic and acidic residues. The tract at residues 1154–1238 (KREEAIEKAK…TTIAAVPPYI (85 aa)) is disordered. The residue at position 1251 (tyrosine 1251) is a Phosphotyrosine. Serine 1258 bears the Phosphoserine mark.

In terms of assembly, interacts with HDAC1 and ATN1. Interaction with ATN1 is improved when the poly-Gln region of ATN1 is extended. Interacts with FAT1.

The protein resides in the nucleus. The protein localises to the PML body. In terms of biological role, plays a role as a transcriptional repressor during development. May play a role in the control of cell survival. The sequence is that of Arginine-glutamic acid dipeptide repeats protein (Rere) from Mus musculus (Mouse).